We begin with the raw amino-acid sequence, 479 residues long: Aspartyl/glutamyl-tRNA(Asn/Gln) amidotransferase subunit B (479 aa).

Belongs to the GatB/GatE family. GatB subfamily. In terms of assembly, heterotrimer of A, B and C subunits.

The enzyme catalyses L-glutamyl-tRNA(Gln) + L-glutamine + ATP + H2O = L-glutaminyl-tRNA(Gln) + L-glutamate + ADP + phosphate + H(+). It carries out the reaction L-aspartyl-tRNA(Asn) + L-glutamine + ATP + H2O = L-asparaginyl-tRNA(Asn) + L-glutamate + ADP + phosphate + 2 H(+). Its function is as follows. Allows the formation of correctly charged Asn-tRNA(Asn) or Gln-tRNA(Gln) through the transamidation of misacylated Asp-tRNA(Asn) or Glu-tRNA(Gln) in organisms which lack either or both of asparaginyl-tRNA or glutaminyl-tRNA synthetases. The reaction takes place in the presence of glutamine and ATP through an activated phospho-Asp-tRNA(Asn) or phospho-Glu-tRNA(Gln). This is Aspartyl/glutamyl-tRNA(Asn/Gln) amidotransferase subunit B from Geobacter sulfurreducens (strain ATCC 51573 / DSM 12127 / PCA).